The sequence spans 314 residues: BURP domain-containing protein 8 (314 aa).

The signal sequence occupies residues 1 to 16; that stretch reads MDLVRLTSLLPPSVMG. A BURP domain is found at 98-314; it reads FFLEKDLFPG…PLGDMLWVRN (217 aa).

In terms of tissue distribution, expressed in shoot and panicles.

This is BURP domain-containing protein 8 (BURP8) from Oryza sativa subsp. japonica (Rice).